Reading from the N-terminus, the 216-residue chain is Outer-membrane lipoprotein LolB (216 aa).

The N-terminal stretch at 1–21 is a signal peptide; sequence MLIFKICFYRLLPLSVLLLAA. Cys22 carries N-palmitoyl cysteine lipidation. A lipid anchor (S-diacylglycerol cysteine) is attached at Cys22.

Belongs to the LolB family. In terms of assembly, monomer.

Its subcellular location is the cell outer membrane. Functionally, plays a critical role in the incorporation of lipoproteins in the outer membrane after they are released by the LolA protein. The sequence is that of Outer-membrane lipoprotein LolB from Hamiltonella defensa subsp. Acyrthosiphon pisum (strain 5AT).